We begin with the raw amino-acid sequence, 510 residues long: Lysine--tRNA ligase (510 aa).

Mg(2+)-binding residues include Glu-420 and Glu-427.

This sequence belongs to the class-II aminoacyl-tRNA synthetase family. Homodimer. Requires Mg(2+) as cofactor.

The protein resides in the cytoplasm. It catalyses the reaction tRNA(Lys) + L-lysine + ATP = L-lysyl-tRNA(Lys) + AMP + diphosphate. The polypeptide is Lysine--tRNA ligase (Vibrio vulnificus (strain YJ016)).